The chain runs to 464 residues: Argininosuccinate lyase (464 aa).

The protein belongs to the lyase 1 family. Argininosuccinate lyase subfamily.

It localises to the cytoplasm. It catalyses the reaction 2-(N(omega)-L-arginino)succinate = fumarate + L-arginine. The protein operates within amino-acid biosynthesis; L-arginine biosynthesis; L-arginine from L-ornithine and carbamoyl phosphate: step 3/3. The chain is Argininosuccinate lyase from Crocosphaera subtropica (strain ATCC 51142 / BH68) (Cyanothece sp. (strain ATCC 51142)).